The chain runs to 75 residues: CDC42 small effector protein 2-B (75 aa).

Residues cysteine 10 and cysteine 11 are each lipidated (S-palmitoyl cysteine). The 14-residue stretch at 29–42 folds into the CRIB domain; that stretch reads IGEPMNFVHTAHVG.

This sequence belongs to the CDC42SE/SPEC family.

It is found in the cytoplasm. It localises to the cytoskeleton. The protein resides in the cell membrane. Functionally, probably involved in the organization of the actin cytoskeleton by acting downstream of CDC42, inducing actin filament assembly. The polypeptide is CDC42 small effector protein 2-B (cdc42se2-b) (Xenopus laevis (African clawed frog)).